Reading from the N-terminus, the 276-residue chain is Phosducin-like protein 1 (276 aa).

4 positions are modified to phosphoserine: Ser-18, Ser-19, Ser-20, and Ser-42. Positions Ser-18–Asp-74 are disordered. Positions Ser-62–Arg-272 constitute a Phosducin domain. The thioredoxin fold stretch occupies residues Phe-153–Asn-276.

The protein belongs to the phosducin family. In terms of assembly, forms a complex with the beta and gamma subunits of the GTP-binding proteins. Interacts with the CCT chaperonin complex.

In terms of biological role, functions as a co-chaperone for CCT in the assembly of heterotrimeric G protein complexes, facilitates the assembly of both Gbeta-Ggamma and RGS-Gbeta5 heterodimers. This chain is Phosducin-like protein 1, found in Drosophila melanogaster (Fruit fly).